Here is a 391-residue protein sequence, read N- to C-terminus: MVKYMVLKIKDNIYCMSFIEWKIKEYRGLDIEKGTTYNSYLILDKNNVIIDTTRIKYFDELLSYLKDVANLKLDYIISNHISPDHNECIEKLIELTEAKIVTTKIRKYYLDAQFNTKDWEFVIVKNGDELNIGNRTLKFITDDKCEYMLTYCVEDKILFSNDLFSQHVVYKEKIDSDIGHKIMLDAKEYFANILLPYRKSILKILNILKDLDLEYICPSHGVIWHIMIDEILTKYRMWCSDSYKNTAVIVYATIYSSTEKIAKALGEGLSEEGVDVIYHRLDTSPLNIIMRDILDAKYVLVGSPTINMNVHPKVGMLLTYIEGLKPSNKKIGVAFGSYGWKECATKKIIEAFKRLGFKIVDDKILTFRFAPKENDIKKIKEFGRKLAKINV.

One can recognise a Flavodoxin-like domain in the interval 247–387 (AVIVYATIYS…KIKEFGRKLA (141 aa)).

This is an uncharacterized protein from Methanocaldococcus jannaschii (strain ATCC 43067 / DSM 2661 / JAL-1 / JCM 10045 / NBRC 100440) (Methanococcus jannaschii).